Consider the following 236-residue polypeptide: Homeobox protein notochord (236 aa).

A DNA-binding region (homeobox) is located at residues 138 to 197 (MKRIRTVFTPEQLEKLEKEFLKQQYMVGTERVDLASTLNLTETQVKVWFQNRRIKWRKQS). The tract at residues 209-236 (GVIPADSSDHTDDSRETEEDEDDLDVEL) is disordered. Acidic residues predominate over residues 223 to 236 (RETEEDEDDLDVEL).

Expressed throughout the embryo during pre-gastrula stages. Localized to the dorsal lip of the blastopore (Spemann organizer) during early gastrulation, after which expression continues in tissues derived from the organizer. Expressed in the notochord during mid-gastrulation. During neurulation, expressed in the notochord, archenteron roof and the prospective floor plate. Also expressed in the region that will become the epiphysis, the pineal body precursor. By the early tailbud stages, expression is limited to posterior notochord and floor plate before becoming restricted to the tip of the tail in the tadpole.

It localises to the nucleus. Its function is as follows. Transcriptional repressor. Plays a fundamental role in notochord formation, acting within the mesodermal region. The polypeptide is Homeobox protein notochord (noto) (Xenopus laevis (African clawed frog)).